The chain runs to 501 residues: Probable cytosol aminopeptidase (501 aa).

2 residues coordinate Mn(2+): Lys257 and Asp262. Lys269 is a catalytic residue. Mn(2+)-binding residues include Asp281, Asp341, and Glu343. The active site involves Arg345.

Belongs to the peptidase M17 family. The cofactor is Mn(2+).

Its subcellular location is the cytoplasm. It catalyses the reaction Release of an N-terminal amino acid, Xaa-|-Yaa-, in which Xaa is preferably Leu, but may be other amino acids including Pro although not Arg or Lys, and Yaa may be Pro. Amino acid amides and methyl esters are also readily hydrolyzed, but rates on arylamides are exceedingly low.. The enzyme catalyses Release of an N-terminal amino acid, preferentially leucine, but not glutamic or aspartic acids.. Presumably involved in the processing and regular turnover of intracellular proteins. Catalyzes the removal of unsubstituted N-terminal amino acids from various peptides. This is Probable cytosol aminopeptidase from Synechococcus sp. (strain RCC307).